The following is a 298-amino-acid chain: GTPase Era (298 aa).

An Era-type G domain is found at 8–176 (RCGRIAVIGR…VSDLLALLPE (169 aa)). Residues 16 to 23 (GRPNVGKS) are G1. 16–23 (GRPNVGKS) is a binding site for GTP. The segment at 42-46 (QTTRH) is G2. The G3 stretch occupies residues 63–66 (DTPG). GTP is bound by residues 63–67 (DTPGL) and 125–128 (NKID). The G4 stretch occupies residues 125–128 (NKID). A G5 region spans residues 155-157 (VSA). In terms of domain architecture, KH type-2 spans 199–283 (VREQVMRQLG…FLETWVRVRK (85 aa)).

The protein belongs to the TRAFAC class TrmE-Era-EngA-EngB-Septin-like GTPase superfamily. Era GTPase family. Monomer.

Its subcellular location is the cytoplasm. The protein localises to the cell inner membrane. In terms of biological role, an essential GTPase that binds both GDP and GTP, with rapid nucleotide exchange. Plays a role in 16S rRNA processing and 30S ribosomal subunit biogenesis and possibly also in cell cycle regulation and energy metabolism. In Xylella fastidiosa (strain Temecula1 / ATCC 700964), this protein is GTPase Era.